The following is a 492-amino-acid chain: Catalase isozyme 1 (492 aa).

Catalysis depends on residues His-65 and Asn-138. Tyr-348 is a binding site for heme.

It belongs to the catalase family. Homotetramer. It depends on heme as a cofactor. In terms of tissue distribution, in whole endosperms (aleurones plus starchy endosperm), in isolated aleurones and in developing seeds.

The protein localises to the peroxisome. It is found in the glyoxysome. The catalysed reaction is 2 H2O2 = O2 + 2 H2O. Occurs in almost all aerobically respiring organisms and serves to protect cells from the toxic effects of hydrogen peroxide. The protein is Catalase isozyme 1 (CAT1) of Hordeum vulgare (Barley).